Here is a 126-residue protein sequence, read N- to C-terminus: Glycine cleavage system H protein (126 aa).

Positions 19-100 (DGKIGITDHA…AHAAWMVKVE (82 aa)) constitute a Lipoyl-binding domain. Lys-60 is modified (N6-lipoyllysine).

It belongs to the GcvH family. As to quaternary structure, the glycine cleavage system is composed of four proteins: P, T, L and H. (R)-lipoate is required as a cofactor.

The glycine cleavage system catalyzes the degradation of glycine. The H protein shuttles the methylamine group of glycine from the P protein to the T protein. This Koribacter versatilis (strain Ellin345) protein is Glycine cleavage system H protein.